The chain runs to 434 residues: Trigger factor (434 aa).

The region spanning 161 to 246 (EDRVVIDFTG…VKQVQAPVLP (86 aa)) is the PPIase FKBP-type domain.

This sequence belongs to the FKBP-type PPIase family. Tig subfamily.

The protein localises to the cytoplasm. It carries out the reaction [protein]-peptidylproline (omega=180) = [protein]-peptidylproline (omega=0). Functionally, involved in protein export. Acts as a chaperone by maintaining the newly synthesized protein in an open conformation. Functions as a peptidyl-prolyl cis-trans isomerase. This is Trigger factor from Dechloromonas aromatica (strain RCB).